Reading from the N-terminus, the 551-residue chain is DNA mismatch repair protein MutL (551 aa).

Belongs to the DNA mismatch repair MutL/HexB family.

Its function is as follows. This protein is involved in the repair of mismatches in DNA. It is required for dam-dependent methyl-directed DNA mismatch repair. May act as a 'molecular matchmaker', a protein that promotes the formation of a stable complex between two or more DNA-binding proteins in an ATP-dependent manner without itself being part of a final effector complex. The polypeptide is DNA mismatch repair protein MutL (Thermosipho melanesiensis (strain DSM 12029 / CIP 104789 / BI429)).